Here is a 24-residue protein sequence, read N- to C-terminus: Gaegurin-6 (24 aa).

Cysteines 18 and 24 form a disulfide.

The protein belongs to the frog skin active peptide (FSAP) family. Brevinin subfamily. Monomer. Expressed by the skin glands.

It is found in the secreted. Has a non-hemolytic activity. Has a broad spectrum of activity against both Gram-positive and Gram-negative bacteria, fungi and protozoa. The polypeptide is Gaegurin-6 (GGN6) (Glandirana rugosa (Japanese wrinkled frog)).